The chain runs to 202 residues: ATP-dependent Clp protease proteolytic subunit (202 aa).

Serine 101 serves as the catalytic Nucleophile. The active site involves histidine 126.

Belongs to the peptidase S14 family. Component of the chloroplastic Clp protease core complex.

The protein localises to the plastid. The protein resides in the chloroplast stroma. The enzyme catalyses Hydrolysis of proteins to small peptides in the presence of ATP and magnesium. alpha-casein is the usual test substrate. In the absence of ATP, only oligopeptides shorter than five residues are hydrolyzed (such as succinyl-Leu-Tyr-|-NHMec, and Leu-Tyr-Leu-|-Tyr-Trp, in which cleavage of the -Tyr-|-Leu- and -Tyr-|-Trp bonds also occurs).. Functionally, cleaves peptides in various proteins in a process that requires ATP hydrolysis. Has a chymotrypsin-like activity. Plays a major role in the degradation of misfolded proteins. The chain is ATP-dependent Clp protease proteolytic subunit from Drimys granadensis.